The chain runs to 33 residues: Cytochrome b6-f complex subunit 8 (33 aa).

The chain crosses the membrane as a helical span at residues 2 to 22; the sequence is LFTLAWASLAAVFSFSIAMVV.

This sequence belongs to the PetN family. As to quaternary structure, the 4 large subunits of the cytochrome b6-f complex are cytochrome b6, subunit IV (17 kDa polypeptide, PetD), cytochrome f and the Rieske protein, while the 4 small subunits are PetG, PetL, PetM and PetN. The complex functions as a dimer.

It is found in the cellular thylakoid membrane. In terms of biological role, component of the cytochrome b6-f complex, which mediates electron transfer between photosystem II (PSII) and photosystem I (PSI), cyclic electron flow around PSI, and state transitions. The sequence is that of Cytochrome b6-f complex subunit 8 from Synechococcus sp. (strain WH7803).